The chain runs to 162 residues: ATP synthase subunit b (162 aa).

The chain crosses the membrane as a helical span at residues 6–28 (LVTFVLTIVNILVLFYLLKRFLF).

This sequence belongs to the ATPase B chain family. In terms of assembly, F-type ATPases have 2 components, F(1) - the catalytic core - and F(0) - the membrane proton channel. F(1) has five subunits: alpha(3), beta(3), gamma(1), delta(1), epsilon(1). F(0) has three main subunits: a(1), b(2) and c(10-14). The alpha and beta chains form an alternating ring which encloses part of the gamma chain. F(1) is attached to F(0) by a central stalk formed by the gamma and epsilon chains, while a peripheral stalk is formed by the delta and b chains.

It is found in the cell membrane. F(1)F(0) ATP synthase produces ATP from ADP in the presence of a proton or sodium gradient. F-type ATPases consist of two structural domains, F(1) containing the extramembraneous catalytic core and F(0) containing the membrane proton channel, linked together by a central stalk and a peripheral stalk. During catalysis, ATP synthesis in the catalytic domain of F(1) is coupled via a rotary mechanism of the central stalk subunits to proton translocation. Functionally, component of the F(0) channel, it forms part of the peripheral stalk, linking F(1) to F(0). The sequence is that of ATP synthase subunit b from Natranaerobius thermophilus (strain ATCC BAA-1301 / DSM 18059 / JW/NM-WN-LF).